The sequence spans 329 residues: Glycerol-3-phosphate dehydrogenase [NAD(P)+] (329 aa).

NADPH-binding residues include tryptophan 11, arginine 30, and lysine 103. Sn-glycerol 3-phosphate contacts are provided by lysine 103, glycine 132, and serine 134. Alanine 136 serves as a coordination point for NADPH. Lysine 187, aspartate 240, serine 250, arginine 251, and asparagine 252 together coordinate sn-glycerol 3-phosphate. Catalysis depends on lysine 187, which acts as the Proton acceptor. An NADPH-binding site is contributed by arginine 251. The NADPH site is built by valine 275 and glutamate 277.

This sequence belongs to the NAD-dependent glycerol-3-phosphate dehydrogenase family.

The protein resides in the cytoplasm. The enzyme catalyses sn-glycerol 3-phosphate + NAD(+) = dihydroxyacetone phosphate + NADH + H(+). The catalysed reaction is sn-glycerol 3-phosphate + NADP(+) = dihydroxyacetone phosphate + NADPH + H(+). It participates in membrane lipid metabolism; glycerophospholipid metabolism. Functionally, catalyzes the reduction of the glycolytic intermediate dihydroxyacetone phosphate (DHAP) to sn-glycerol 3-phosphate (G3P), the key precursor for phospholipid synthesis. The protein is Glycerol-3-phosphate dehydrogenase [NAD(P)+] of Nitrosomonas eutropha (strain DSM 101675 / C91 / Nm57).